Reading from the N-terminus, the 154-residue chain is 3-dehydroquinate dehydratase 2 (154 aa).

The active-site Proton acceptor is tyrosine 23. Substrate contacts are provided by asparagine 79, histidine 85, and aspartate 92. Catalysis depends on histidine 105, which acts as the Proton donor. Substrate contacts are provided by residues 106-107 (IS) and arginine 116.

It belongs to the type-II 3-dehydroquinase family. In terms of assembly, homododecamer.

It carries out the reaction 3-dehydroquinate = 3-dehydroshikimate + H2O. It participates in metabolic intermediate biosynthesis; chorismate biosynthesis; chorismate from D-erythrose 4-phosphate and phosphoenolpyruvate: step 3/7. Functionally, catalyzes a trans-dehydration via an enolate intermediate. In Ralstonia nicotianae (strain ATCC BAA-1114 / GMI1000) (Ralstonia solanacearum), this protein is 3-dehydroquinate dehydratase 2 (aroQ2).